The chain runs to 1203 residues: DNA-directed RNA polymerase subunit beta' (1203 aa).

Zn(2+) contacts are provided by Cys-60, Cys-62, Cys-75, and Cys-78. Residues Asp-449, Asp-451, and Asp-453 each coordinate Mg(2+). Residues Cys-818, Cys-892, Cys-899, and Cys-902 each coordinate Zn(2+). Positions 1180 to 1203 (RNLESGLDMPESAEESSEEETQTV) are disordered. The segment covering 1190–1203 (ESAEESSEEETQTV) has biased composition (acidic residues).

This sequence belongs to the RNA polymerase beta' chain family. The RNAP catalytic core consists of 2 alpha, 1 beta, 1 beta' and 1 omega subunit. When a sigma factor is associated with the core the holoenzyme is formed, which can initiate transcription. Requires Mg(2+) as cofactor. It depends on Zn(2+) as a cofactor.

The catalysed reaction is RNA(n) + a ribonucleoside 5'-triphosphate = RNA(n+1) + diphosphate. Functionally, DNA-dependent RNA polymerase catalyzes the transcription of DNA into RNA using the four ribonucleoside triphosphates as substrates. The protein is DNA-directed RNA polymerase subunit beta' of Oceanobacillus iheyensis (strain DSM 14371 / CIP 107618 / JCM 11309 / KCTC 3954 / HTE831).